A 430-amino-acid chain; its full sequence is 3-phosphoshikimate 1-carboxyvinyltransferase (430 aa).

3-phosphoshikimate-binding residues include Lys21, Ser22, and Arg26. Lys21 contributes to the phosphoenolpyruvate binding site. The phosphoenolpyruvate site is built by Gly94 and Arg122. 3-phosphoshikimate contacts are provided by Ser167, Gln169, Asp317, and Lys344. Residue Gln169 participates in phosphoenolpyruvate binding. The active-site Proton acceptor is the Asp317. Phosphoenolpyruvate is bound by residues Arg348 and Arg390.

Belongs to the EPSP synthase family. In terms of assembly, monomer.

It localises to the cytoplasm. It carries out the reaction 3-phosphoshikimate + phosphoenolpyruvate = 5-O-(1-carboxyvinyl)-3-phosphoshikimate + phosphate. Its pathway is metabolic intermediate biosynthesis; chorismate biosynthesis; chorismate from D-erythrose 4-phosphate and phosphoenolpyruvate: step 6/7. Its function is as follows. Catalyzes the transfer of the enolpyruvyl moiety of phosphoenolpyruvate (PEP) to the 5-hydroxyl of shikimate-3-phosphate (S3P) to produce enolpyruvyl shikimate-3-phosphate and inorganic phosphate. The sequence is that of 3-phosphoshikimate 1-carboxyvinyltransferase from Thermodesulfovibrio yellowstonii (strain ATCC 51303 / DSM 11347 / YP87).